Here is a 402-residue protein sequence, read N- to C-terminus: Secondary metabolism regulator laeA (402 aa).

Residues 1 to 70 (MSLKYYLNDL…MSPTEVCSTD (70 aa)) form a disordered region. Over residues 11–21 (SDSDSESESEC) the composition is skewed to acidic residues.

This sequence belongs to the methyltransferase superfamily. LaeA methyltransferase family.

The protein resides in the nucleus. The enzyme catalyses L-methionyl-[protein] + S-adenosyl-L-methionine = S-methyl-L-methionyl-[protein] + S-adenosyl-L-homocysteine. In terms of biological role, methyltransferase that performs automethylation. No other methyl-accepting substrate has been identified yet. Acts as a global regulator for secondary metabolite gene expression. Negatively regulates the production of coprinoferrin, a structurally novel acylated tripeptide hydroxamate siderophore. This is Secondary metabolism regulator laeA from Coprinopsis cinerea (strain Okayama-7 / 130 / ATCC MYA-4618 / FGSC 9003) (Inky cap fungus).